A 617-amino-acid chain; its full sequence is Zinc finger protein 613 (617 aa).

Residues 8–78 (LTLEDVAVEF…ENEIHSQICP (71 aa)) enclose the KRAB domain. 12 consecutive C2H2-type zinc fingers follow at residues 204 to 226 (HVCT…QRVH), 232 to 254 (HGCS…QRNH), 260 to 282 (YECT…QKIH), 288 to 310 (YICS…QRVH), 316 to 338 (HGCS…QRTH), 344 to 366 (YECT…QKAH), 372 to 394 (YICR…QRIH), 400 to 422 (YICN…RRTH), 428 to 450 (YVCN…QRFH), 456 to 478 (FVCT…QRIH), 484 to 506 (YTCS…RRTH), and 512 to 535 (YGCS…GMLH).

It belongs to the krueppel C2H2-type zinc-finger protein family.

The protein resides in the nucleus. May be involved in transcriptional regulation. This Homo sapiens (Human) protein is Zinc finger protein 613 (ZNF613).